A 283-amino-acid polypeptide reads, in one-letter code: Phosphate import ATP-binding protein PstB 1 (283 aa).

The span at Met-1–Phe-16 shows a compositional bias: acidic residues. Residues Met-1–Arg-35 are disordered. Residues Ile-38–Ile-278 form the ABC transporter domain. Gly-70 to Ser-77 provides a ligand contact to ATP.

The protein belongs to the ABC transporter superfamily. Phosphate importer (TC 3.A.1.7) family. In terms of assembly, the complex is composed of two ATP-binding proteins (PstB), two transmembrane proteins (PstC and PstA) and a solute-binding protein (PstS).

It is found in the cell membrane. It carries out the reaction phosphate(out) + ATP + H2O = ADP + 2 phosphate(in) + H(+). Functionally, part of the ABC transporter complex PstSACB involved in phosphate import. Responsible for energy coupling to the transport system. This chain is Phosphate import ATP-binding protein PstB 1, found in Natronomonas pharaonis (strain ATCC 35678 / DSM 2160 / CIP 103997 / JCM 8858 / NBRC 14720 / NCIMB 2260 / Gabara) (Halobacterium pharaonis).